A 390-amino-acid chain; its full sequence is Malonyl-CoA-acyl carrier protein transacylase, mitochondrial (390 aa).

Residues 1 to 21 (MSVRVARVAWVRGLGASYRRG) constitute a mitochondrion transit peptide. Catalysis depends on residues S153 and H270. An N6-succinyllysine modification is found at K314.

The protein belongs to the type II malonyltransferase family.

The protein localises to the mitochondrion. It catalyses the reaction holo-[ACP] + malonyl-CoA = malonyl-[ACP] + CoA. It participates in lipid metabolism; fatty acid biosynthesis. Functionally, catalyzes the transfer of a malonyl moiety from malonyl-CoA to the free thiol group of the phosphopantetheine arm of the mitochondrial ACP protein (NDUFAB1). This suggests the existence of the biosynthesis of fatty acids in mitochondria. Also acts as a mitochondrial small ribosomal subunit (mt-SSU) assembly factor. The polypeptide is Malonyl-CoA-acyl carrier protein transacylase, mitochondrial (Homo sapiens (Human)).